The following is a 421-amino-acid chain: NADH-quinone oxidoreductase subunit F (421 aa).

54–63 contributes to the NAD(+) binding site; the sequence is GRGGAGFSTG. Position 166-213 (166-213) interacts with FMN; the sequence is GAGAYICGEETALLESLEGKKGMPRLKPPFPAGFGLYGCPTTINNVES. [4Fe-4S] cluster-binding residues include Cys344, Cys347, Cys350, and Cys390.

This sequence belongs to the complex I 51 kDa subunit family. The cofactor is FMN. It depends on [4Fe-4S] cluster as a cofactor.

It catalyses the reaction a quinone + NADH + 5 H(+)(in) = a quinol + NAD(+) + 4 H(+)(out). NDH-1 shuttles electrons from NADH, via FMN and iron-sulfur (Fe-S) centers, to quinones in the respiratory chain. Couples the redox reaction to proton translocation (for every two electrons transferred, four hydrogen ions are translocated across the cytoplasmic membrane), and thus conserves the redox energy in a proton gradient. The protein is NADH-quinone oxidoreductase subunit F (nuoF) of Rickettsia typhi (strain ATCC VR-144 / Wilmington).